The primary structure comprises 373 residues: Opsin Rh1 (373 aa).

Residues 1 to 49 (MESFAVAAAQLGPHFAPLSNGSVVDKVTPDMAHLISPYWNQFPAMDPIW) lie on the Extracellular side of the membrane. N-linked (GlcNAc...) asparagine glycosylation occurs at Asn-20. A helical transmembrane segment spans residues 50–74 (AKILTAYMIMIGMISWCGNGVVIYI). The Cytoplasmic portion of the chain corresponds to 75–86 (FATTKSLRTPAN). A helical transmembrane segment spans residues 87 to 112 (LLVINLAISDFGIMITNTPMMGINLY). The Extracellular portion of the chain corresponds to 113–126 (FETWVLGPMMCDIY). A disulfide bridge connects residues Cys-123 and Cys-200. A helical membrane pass occupies residues 127 to 146 (AGLGSAFGCSSIWSMCMISL). At 147–165 (DRYQVIVKGMAGRPMTIPL) the chain is on the cytoplasmic side. A helical transmembrane segment spans residues 166 to 189 (ALGKIAYIWFMSSIWCLAPAFGWS). Residues 190-213 (RYVPEGNLTSCGIDYLERDWNPRS) are Extracellular-facing. Asn-196 is a glycosylation site (N-linked (GlcNAc...) asparagine). The chain crosses the membrane as a helical span at residues 214-241 (YLIFYSIFVYYIPLFLICYSYWFIIAAV). At 242 to 276 (SAHEKAMREQAKKMNVKSLRSSEDAEKSAEGKLAK) the chain is on the cytoplasmic side. A helical transmembrane segment spans residues 277-300 (VALVTITLWFMAWTPYLVINCMGL). The Extracellular segment spans residues 301–307 (FKFEGLT). The helical transmembrane segment at 308 to 332 (PLNTIWGACFAKSAACYNPIVYGIS) threads the bilayer. Residue Lys-319 is modified to N6-(retinylidene)lysine. The Cytoplasmic portion of the chain corresponds to 333 to 373 (HPKYRLALKEKCPCCVFGKVDDGKSSDAQSQATASEAESKA). Positions 354–373 (DGKSSDAQSQATASEAESKA) are disordered. Positions 358–373 (SDAQSQATASEAESKA) are enriched in low complexity.

The protein belongs to the G-protein coupled receptor 1 family. Opsin subfamily. Post-translationally, phosphorylated on some or all of the serine and threonine residues present in the C-terminal region.

The protein localises to the cell projection. It localises to the rhabdomere membrane. Functionally, visual pigments are the light-absorbing molecules that mediate vision. They consist of an apoprotein, opsin, covalently linked to cis-retinal. This is Opsin Rh1 (ninaE) from Drosophila melanogaster (Fruit fly).